The chain runs to 307 residues: MAERSELHTRNKHNGQYDFSLLTENYPPLRKFVLLNPLGIQTIDFFNPHAVKALNKALLISYYGIRYWDIPRNYLCPPIPGRADYVHYIADLIDPERVSNTANEENGDKPKRQCRCLDIGVGANCIYPIIGHVEYGWMFVGSDIDPVSIENARKIVTCNPVLAHKIDLRLQKDNRRIFDGIIAPDEYFDVTICNPPFHSSKKEAEEGTLRKLSSLKGEKVKKTKLNFGGNANELWCEGGELRFLLNMISESRKYRKNCGWFTSLVSKEKNLDKLYAKLKAVHVSEYKIIRMCQGTKNSRILAWRFLE.

It belongs to the methyltransferase superfamily. METTL16/RlmF family.

The protein resides in the cytoplasm. The catalysed reaction is adenosine(1618) in 23S rRNA + S-adenosyl-L-methionine = N(6)-methyladenosine(1618) in 23S rRNA + S-adenosyl-L-homocysteine + H(+). In terms of biological role, specifically methylates the adenine in position 1618 of 23S rRNA. The sequence is that of Ribosomal RNA large subunit methyltransferase F from Bacteroides thetaiotaomicron (strain ATCC 29148 / DSM 2079 / JCM 5827 / CCUG 10774 / NCTC 10582 / VPI-5482 / E50).